The primary structure comprises 625 residues: Endo-1,4-beta-xylanase A (625 aa).

The N-terminal stretch at 1–19 (MKLFQIFPLLLSLTSVTLA) is a signal peptide. The 197-residue stretch at 35–231 (VSTGHDVKKI…TGGGCSGSVE (197 aa)) folds into the GH11 1 domain. The interval 245 to 283 (DGKSKGGSSSGGSNGQGLGNGQGNGQGQGNGQGQSATGS) is disordered. A compositionally biased stretch (gly residues) spans 252-276 (SSSGGSNGQGLGNGQGNGQGQGNGQ). The segment at 255–279 (GGSNGQGLGNGQGNGQGQGNGQGQS) is linker. A run of 2 repeats spans residues 259–268 (GQGLGNGQGN) and 269–278 (GQGQGNGQGQ). The 2 X 10 AA tandem repeats of G-Q-G-[LQ]-G-N-G-Q-G-[NQ] stretch occupies residues 259-278 (GQGLGNGQGNGQGQGNGQGQ). CBM10 domains are found at residues 285-324 (KCPSTITSQGYKCCSSNCDIIYRDQSGDWGVENDEWCGCG) and 332-371 (NCPSSIKNQGYKCCSDSCEIVLTDSDGDWGIENDEWCGCG). A linker region spans residues 374-403 (NTTPTTTTKKSNNSQPTQGQSNNNSSTNTN). Positions 379 to 399 (TTTKKSNNSQPTQGQSNNNSS) are disordered. A GH11 2 domain is found at 416-617 (TETSNKVGSI…GSGTSGTADF (202 aa)). Residue Glu510 is the Nucleophile of the active site. Glu603 functions as the Proton donor in the catalytic mechanism.

This sequence belongs to the glycosyl hydrolase 11 (cellulase G) family.

The catalysed reaction is Endohydrolysis of (1-&gt;4)-beta-D-xylosidic linkages in xylans.. It participates in glycan degradation; xylan degradation. Its function is as follows. Hydrolyzes 1,4-beta linked polysaccharide backbones of xylans, one of the major hemicellulose components in hardwoods and softwoods. It is more active against xylopentaose than xylotetraose, has trace activity against xylotriose. The major products released from hydrolysis of xylooligosaccharides are xylobiose and xylotriose. The reiterated 40 AA domain is involved in binding the cellulase-hemicellulase complex. The polypeptide is Endo-1,4-beta-xylanase A (XYNA) (Piromyces sp).